A 208-amino-acid polypeptide reads, in one-letter code: Protein-L-isoaspartate O-methyltransferase (208 aa).

The active site involves serine 59.

Belongs to the methyltransferase superfamily. L-isoaspartyl/D-aspartyl protein methyltransferase family.

The protein localises to the cytoplasm. The catalysed reaction is [protein]-L-isoaspartate + S-adenosyl-L-methionine = [protein]-L-isoaspartate alpha-methyl ester + S-adenosyl-L-homocysteine. Its function is as follows. Catalyzes the methyl esterification of L-isoaspartyl residues in peptides and proteins that result from spontaneous decomposition of normal L-aspartyl and L-asparaginyl residues. It plays a role in the repair and/or degradation of damaged proteins. This is Protein-L-isoaspartate O-methyltransferase from Photorhabdus laumondii subsp. laumondii (strain DSM 15139 / CIP 105565 / TT01) (Photorhabdus luminescens subsp. laumondii).